A 96-amino-acid chain; its full sequence is MKIRPLHDRVIVKRMEEERKTASGIVIPDTAAEKPDQGEIVAVGAGKKDDQGKLISLDVKVGDRVLFGKYAGQTVKVEGEELLVMREEDIMGVVEQ.

The protein belongs to the GroES chaperonin family. Heptamer of 7 subunits arranged in a ring. Interacts with the chaperonin GroEL.

The protein localises to the cytoplasm. Its function is as follows. Together with the chaperonin GroEL, plays an essential role in assisting protein folding. The GroEL-GroES system forms a nano-cage that allows encapsulation of the non-native substrate proteins and provides a physical environment optimized to promote and accelerate protein folding. GroES binds to the apical surface of the GroEL ring, thereby capping the opening of the GroEL channel. This Thiobacillus denitrificans (strain ATCC 25259 / T1) protein is Co-chaperonin GroES.